Consider the following 641-residue polypeptide: 1-deoxy-D-xylulose-5-phosphate synthase (641 aa).

Residues His-79 and 120–122 each bind thiamine diphosphate; that span reads GHS. Residue Asp-151 participates in Mg(2+) binding. Residues 152–153, Asn-180, Tyr-290, and Glu-372 contribute to the thiamine diphosphate site; that span reads GS. Asn-180 serves as a coordination point for Mg(2+).

The protein belongs to the transketolase family. DXPS subfamily. As to quaternary structure, homodimer. It depends on Mg(2+) as a cofactor. Requires thiamine diphosphate as cofactor.

The catalysed reaction is D-glyceraldehyde 3-phosphate + pyruvate + H(+) = 1-deoxy-D-xylulose 5-phosphate + CO2. It functions in the pathway metabolic intermediate biosynthesis; 1-deoxy-D-xylulose 5-phosphate biosynthesis; 1-deoxy-D-xylulose 5-phosphate from D-glyceraldehyde 3-phosphate and pyruvate: step 1/1. Its function is as follows. Catalyzes the acyloin condensation reaction between C atoms 2 and 3 of pyruvate and glyceraldehyde 3-phosphate to yield 1-deoxy-D-xylulose-5-phosphate (DXP). In Rhodopseudomonas palustris (strain TIE-1), this protein is 1-deoxy-D-xylulose-5-phosphate synthase.